We begin with the raw amino-acid sequence, 514 residues long: 2,3-bisphosphoglycerate-independent phosphoglycerate mutase (514 aa).

Asp14 and Ser64 together coordinate Mn(2+). Ser64 acts as the Phosphoserine intermediate in catalysis. Substrate is bound by residues His125, 155 to 156 (RD), Arg187, Arg193, 263 to 266 (RADR), and Lys336. Asp403, His407, Asp444, His445, and His463 together coordinate Mn(2+).

The protein belongs to the BPG-independent phosphoglycerate mutase family. Monomer. Mn(2+) serves as cofactor.

The enzyme catalyses (2R)-2-phosphoglycerate = (2R)-3-phosphoglycerate. It participates in carbohydrate degradation; glycolysis; pyruvate from D-glyceraldehyde 3-phosphate: step 3/5. Its activity is regulated as follows. Insensitive to vanadate. Catalyzes the interconversion of 2-phosphoglycerate (2-PGA) and 3-phosphoglycerate (3-PGA). In Escherichia coli (strain K12), this protein is 2,3-bisphosphoglycerate-independent phosphoglycerate mutase.